The following is a 152-amino-acid chain: Ribonuclease H (152 aa).

The 142-residue stretch at 6–147 (KKNNVIAYTD…ADELANKAIA (142 aa)) folds into the RNase H type-1 domain. 4 residues coordinate Mg(2+): D15, E53, D75, and D139.

It belongs to the RNase H family. In terms of assembly, monomer. The cofactor is Mg(2+).

Its subcellular location is the cytoplasm. The enzyme catalyses Endonucleolytic cleavage to 5'-phosphomonoester.. Functionally, endonuclease that specifically degrades the RNA of RNA-DNA hybrids. The polypeptide is Ribonuclease H (Francisella philomiragia subsp. philomiragia (strain ATCC 25017 / CCUG 19701 / FSC 153 / O#319-036)).